The primary structure comprises 532 residues: Pyruvate kinase (532 aa).

A substrate-binding site is contributed by arginine 63. The K(+) site is built by asparagine 65, serine 67, aspartate 99, and threonine 100. 65 to 68 (NFSH) is an ATP binding site. ATP contacts are provided by arginine 106 and lysine 191. Glutamate 256 is a Mg(2+) binding site. Substrate contacts are provided by glycine 279, aspartate 280, and threonine 312. Residue aspartate 280 participates in Mg(2+) binding.

The protein belongs to the pyruvate kinase family. In terms of assembly, homotetramer. The cofactor is Mg(2+). It depends on K(+) as a cofactor.

It carries out the reaction pyruvate + ATP = phosphoenolpyruvate + ADP + H(+). It participates in carbohydrate degradation; glycolysis; pyruvate from D-glyceraldehyde 3-phosphate: step 5/5. This is Pyruvate kinase (pkiA) from Agaricus bisporus (White button mushroom).